Reading from the N-terminus, the 280-residue chain is Putative high affinity immunoglobulin gamma Fc receptor IB (280 aa).

An N-terminal signal peptide occupies residues 1 to 15 (MWFLTTLLLWVPVDG). Over 16–198 (QVDTTKAVIT…LQLPTPVWFH (183 aa)) the chain is Extracellular. Ig-like C2-type domains are found at residues 22-101 (AVIT…LEIH) and 95-184 (PIQL…ISQY). 2 cysteine pairs are disulfide-bonded: C43/C85 and C124/C168. N59, N152, and N163 each carry an N-linked (GlcNAc...) asparagine glycan. The helical transmembrane segment at 199–219 (VLFYLAVGIMFLVNTVLWVTI) threads the bilayer. The Cytoplasmic portion of the chain corresponds to 220 to 280 (RKELKRKKKW…VHRKEPQGAT (61 aa)). A disordered region spans residues 258-280 (KCQEQKEEQLQEGVHRKEPQGAT).

It belongs to the immunoglobulin superfamily. FCGR1 family.

Its subcellular location is the cell membrane. In terms of biological role, may bind to the Fc region of immunoglobulins gamma with a low affinity compared to FCGR1A. May function in the humoral immune response. The chain is Putative high affinity immunoglobulin gamma Fc receptor IB from Homo sapiens (Human).